Consider the following 405-residue polypeptide: 4-hydroxy-3-methylbut-2-en-1-yl diphosphate synthase (flavodoxin) (405 aa).

[4Fe-4S] cluster-binding residues include Cys297, Cys300, Cys343, and Glu350.

Belongs to the IspG family. [4Fe-4S] cluster is required as a cofactor.

It carries out the reaction (2E)-4-hydroxy-3-methylbut-2-enyl diphosphate + oxidized [flavodoxin] + H2O + 2 H(+) = 2-C-methyl-D-erythritol 2,4-cyclic diphosphate + reduced [flavodoxin]. Its pathway is isoprenoid biosynthesis; isopentenyl diphosphate biosynthesis via DXP pathway; isopentenyl diphosphate from 1-deoxy-D-xylulose 5-phosphate: step 5/6. In terms of biological role, converts 2C-methyl-D-erythritol 2,4-cyclodiphosphate (ME-2,4cPP) into 1-hydroxy-2-methyl-2-(E)-butenyl 4-diphosphate. The protein is 4-hydroxy-3-methylbut-2-en-1-yl diphosphate synthase (flavodoxin) of Francisella tularensis subsp. tularensis (strain FSC 198).